The primary structure comprises 461 residues: Ribitol-5-phosphate transferase FKTN (461 aa).

The Cytoplasmic portion of the chain corresponds to 1–7; it reads MSRINKN. A required and sufficient for interaction with POMGNT1 region spans residues 6–27; that stretch reads KNVVLALLTLTSSAFLLFQLYY. A helical; Signal-anchor for type II membrane protein transmembrane segment spans residues 8-28; that stretch reads VVLALLTLTSSAFLLFQLYYY. Residues 29 to 461 lie on the Lumenal side of the membrane; that stretch reads KHYLSTRNGA…SEWDEVIQLY (433 aa). The N-linked (GlcNAc...) asparagine glycan is linked to Asn92.

It belongs to the LicD transferase family. As to quaternary structure, forms a complex composed of FKTN/fukutin, FKRP and RXYLT1/TMEM5. Interacts (via transmembrane domain) with POMGNT1; the interaction is direct and is required for normal POMGNT1 location in Golgi membranes. In terms of tissue distribution, expressed in the retina (at protein level).

Its subcellular location is the golgi apparatus membrane. It localises to the cytoplasm. It is found in the nucleus. The catalysed reaction is 3-O-[beta-D-GalNAc-(1-&gt;3)-beta-D-GlcNAc-(1-&gt;4)-(O-6-P-alpha-D-Man)]-Thr-[protein] + CDP-L-ribitol = 3-O-[Rib-ol-P-3-beta-D-GalNAc-(1-&gt;3)-beta-D-GlcNAc-(1-&gt;4)-(O-6-P-alpha-D-Man)]-Thr-[protein] + CMP + H(+). It participates in protein modification; protein glycosylation. Its function is as follows. Catalyzes the transfer of CDP-ribitol to the distal N-acetylgalactosamine of the phosphorylated O-mannosyl trisaccharide (N-acetylgalactosamine-beta-3-N-acetylglucosamine-beta-4-(phosphate-6-)mannose), a carbohydrate structure present in alpha-dystroglycan (DAG1). This constitutes the first step in the formation of the ribitol 5-phosphate tandem repeat which links the phosphorylated O-mannosyl trisaccharide to the ligand binding moiety composed of repeats of 3-xylosyl-alpha-1,3-glucuronic acid-beta-1. May interact with and reinforce a large complex encompassing the outside and inside of muscle membranes. Could be involved in brain development. The protein is Ribitol-5-phosphate transferase FKTN of Macaca fascicularis (Crab-eating macaque).